A 499-amino-acid polypeptide reads, in one-letter code: Zinc finger protein PLAG1 (499 aa).

The tract at residues 1 to 33 (MATVIPGDLSEVRDTQKAPSGKRKRGESKPRKN) is disordered. Residues 2–84 (ATVIPGDLSE…SKYKLQRHMA (83 aa)) form an interaction with KPNA2 region. The short motif at 22 to 25 (KRKR) is the Nuclear localization signal element. 7 consecutive C2H2-type zinc fingers follow at residues 34–56 (FPCQ…SFSH), 62–86 (YKCT…MATH), 92–114 (HKCN…LHTH), 121–143 (FKCE…LALH), 150–172 (LTCK…LKSH), 185–207 (HQCE…MVVH), and 213–236 (FLCQ…KKSH). Positions 41–242 (KAFNSVEKLK…KKSHNQELLK (202 aa)) are decreased nuclear import with localization in the nucleus but also in the cytoplasm. The segment at 243–383 (VKTEPVDFLD…SQASSSKLGL (141 aa)) is repression domain; contains 3 sumoylation motifs and massively decrease transcription activity. Residues 243–499 (VKTEPVDFLD…TLPRFHQAFQ (257 aa)) form an activates transcription; Inhibition of nuclear import due to lack of NLS and KPNA2 interaction region. Residues Lys-244 and Lys-263 each participate in a glycyl lysine isopeptide (Lys-Gly) (interchain with G-Cter in SUMO) cross-link. Positions 364-400 (QGGAPSSSQDSQASSSKLGLEPQSGSPDDGAGDLSLS) are disordered. Positions 369-379 (SSSQDSQASSS) are enriched in low complexity. Residues 384 to 499 (EPQSGSPDDG…TLPRFHQAFQ (116 aa)) form a massively activates transcription region.

It belongs to the krueppel C2H2-type zinc-finger protein family. In terms of assembly, interacts with KPNA2, which escorts protein to the nucleus via interaction with nuclear localization signal. Interacts with E3 SUMO-protein ligase PIAS1, PIAS2 and PIAS4. In terms of processing, sumoylated with SUMO1; which inhibits transcriptional activity, but does not affect nuclear localization. Blockers of sumoylation pathway such as SENP3 and inactive UBE2I increases transcriptional capacity. Sumoylation is increased in the presence of PIAS1. Post-translationally, acetylated by lysine acetyltransferase EP300; which activates transcriptional capacity. Lysine residues that are sumoylated also seem to be target for acetylation. As to expression, expressed in heart, spleen, lung, kidney, brain, testis and epididymis but not in salivary glands.

The protein localises to the nucleus. In terms of biological role, transcription factor whose activation results in up-regulation of target genes, such as IGFII, leading to uncontrolled cell proliferation: when overexpressed in cultured cells, higher proliferation rate and transformation are observed. Other target genes such as CRLF1, CRABP2, CRIP2, PIGF are strongly induced in cells with PLAG1 induction. Proto-oncogene whose ectopic expression can trigger the development of pleomorphic adenomas of the salivary gland and lipoblastomas. Cooperates with CBFB-MYH11. This Rattus norvegicus (Rat) protein is Zinc finger protein PLAG1 (Plag1).